Here is a 499-residue protein sequence, read N- to C-terminus: MGGYILAIDQGTTSTRSMVFDRDMRVIGVGQREFPQHFPASGWVEHDAEDIWKSVLETIRLALADAGIAASDIAAIGITNQRETTVLWDRNTGEAVHRAVVWQDRRAAPVCEDLKRRGLEPLFSKKTGLLLDPYFSGTKLKWLLDSVSGLREKAVKGEICFGTVDSFLIYRLTGGRRHVTDATNASRTLIYNIEDNAWDDELLSILNIPRAMLPEVLDCAADFGVTDKALLGAEIPILGVAGDQQAAVIGNACFEPGMMKSTYGTGCFALLNTGTDRVASTNRLLTTIAYRLDGVTTYALEGSIFIAGAAVQWLRDELGFISVASEVSALAEKADPKQRVYLVPAFTGLGAPYWDAEARGAIFGLTRGTGPAEFARAALESVAYQTFDLLDAMRKDWAGDNGKTVLRVDGGMVASDWTMQRLADILAAPVDRPVFLETTILGAAWLAASRAGIWPDRKAFADHWRRDRRFSPDMEESERKNAIAGWRDSVGRCLSKRDN.

Residue threonine 12 participates in ADP binding. ATP-binding residues include threonine 12, threonine 13, and serine 14. Threonine 12 is a sn-glycerol 3-phosphate binding site. Arginine 16 lines the ADP pocket. Arginine 82, glutamate 83, tyrosine 134, and aspartate 243 together coordinate sn-glycerol 3-phosphate. Residues arginine 82, glutamate 83, tyrosine 134, aspartate 243, and glutamine 244 each contribute to the glycerol site. ADP-binding residues include threonine 265 and glycine 308. Residues threonine 265, glycine 308, glutamine 312, and glycine 411 each coordinate ATP. An ADP-binding site is contributed by glycine 411.

Belongs to the FGGY kinase family.

The enzyme catalyses glycerol + ATP = sn-glycerol 3-phosphate + ADP + H(+). The protein operates within polyol metabolism; glycerol degradation via glycerol kinase pathway; sn-glycerol 3-phosphate from glycerol: step 1/1. Inhibited by fructose 1,6-bisphosphate (FBP). Key enzyme in the regulation of glycerol uptake and metabolism. Catalyzes the phosphorylation of glycerol to yield sn-glycerol 3-phosphate. The protein is Glycerol kinase of Agrobacterium fabrum (strain C58 / ATCC 33970) (Agrobacterium tumefaciens (strain C58)).